A 536-amino-acid chain; its full sequence is Vacuolar segregation protein pep7 (536 aa).

Positions 1–31 (MQNGKRRIGVRISSNLSNHSGTNLSTSAQSD) are disordered. Residues 12 to 31 (ISSNLSNHSGTNLSTSAQSD) are compositionally biased toward polar residues. A C2H2-type zinc finger spans residues 39–62 (TECPICGLELPNLSALNDHLDVTH). The FYVE-type 1; degenerate zinc finger occupies 136–201 (PDMVCHDPMC…VCRECYEGRP (66 aa)). Zn(2+) is bound by residues Cys158, Cys161, Cys193, Cys196, Cys281, Cys284, Cys297, Cys300, Cys305, Cys308, Cys324, and Cys327. The FYVE-type 2 zinc finger occupies 275 to 332 (DSVVQICPECNNSFTLTRRRRHCRLCGRVICRFCVLEISLPQHPQPLLICMSCNQNYF).

Required for vacuole segregation and vacuole protein sorting. Possibly part of a complex which tethers the vacuole membrane to microtubules, either directly or via kinesin or dynein-like motor proteins. Probably functions in several interorganelle traffic pathways. The polypeptide is Vacuolar segregation protein pep7 (pep7) (Schizosaccharomyces pombe (strain 972 / ATCC 24843) (Fission yeast)).